The following is a 672-amino-acid chain: PHD finger protein MALE STERILITY 1 (672 aa).

A PHD-type zinc finger spans residues 614–664 (RIECECGATEEDGERMVCCDICEVWQHTRCVGVQHNEEVPRIFLCQSCDQH).

In terms of tissue distribution, in closed flower buds, especially in anthers.

The protein resides in the nucleus. Transcriptional activator required for anther and post-meiotic pollen development and maturation. Seems to regulate inflorescence branching and floral development. May control tapetal development by directly regulating tapetal programmed cell death (PCD) and breakdown. Implicated in pollen cytosolic components and wall development (e.g. exine and intine formation). The chain is PHD finger protein MALE STERILITY 1 (MS1) from Arabidopsis thaliana (Mouse-ear cress).